A 365-amino-acid polypeptide reads, in one-letter code: UPF0718 protein MJ0584 (365 aa).

Transmembrane regions (helical) follow at residues 6-26 (MSFIMNIINVMINTIIDYLNV), 32-52 (LLMAFLMAGGIASMINKNFII), 67-87 (VAAVSGSLLAVCSCTILPLFA), 108-128 (AINVLAIFYSAALLGWDIGFL), 130-150 (AVFAVVVSILIGLSMEIIFKS), 174-194 (ITFFALQFIMLLVITASPKLF), 201-221 (LYDGFLLKHLLFIILGIILAV), 245-265 (IVFPLLIIGVAIAGAIKAIIP), 282-302 (FIASFIGALMYFATLTEVPII), 308-328 (LGMGVGPAMALLLAGPSLSIP), and 344-364 (TYLGLVVIFSTICGYIAGIIL).

Belongs to the UPF0718 family.

It localises to the cell membrane. The protein is UPF0718 protein MJ0584 of Methanocaldococcus jannaschii (strain ATCC 43067 / DSM 2661 / JAL-1 / JCM 10045 / NBRC 100440) (Methanococcus jannaschii).